The chain runs to 353 residues: Quinolinate synthase (353 aa).

The iminosuccinate site is built by His-47 and Ser-68. A [4Fe-4S] cluster-binding site is contributed by Cys-113. Iminosuccinate is bound by residues 139–141 (YAN) and Ser-156. Residue Cys-200 coordinates [4Fe-4S] cluster. Residues 226 to 228 (HPE) and Thr-243 contribute to the iminosuccinate site. Cys-297 is a [4Fe-4S] cluster binding site.

It belongs to the quinolinate synthase family. Type 1 subfamily. The cofactor is [4Fe-4S] cluster.

The protein localises to the cytoplasm. It catalyses the reaction iminosuccinate + dihydroxyacetone phosphate = quinolinate + phosphate + 2 H2O + H(+). The protein operates within cofactor biosynthesis; NAD(+) biosynthesis; quinolinate from iminoaspartate: step 1/1. Catalyzes the condensation of iminoaspartate with dihydroxyacetone phosphate to form quinolinate. The chain is Quinolinate synthase from Serratia proteamaculans (strain 568).